Reading from the N-terminus, the 278-residue chain is Replication protein A 32 kDa subunit B (278 aa).

Residues 70–143 constitute a DNA-binding region (OB); it reads VVIVGRISRM…RSVNVFSVRP (74 aa).

This sequence belongs to the replication factor A protein 2 family. As to quaternary structure, heterotrimer of RPA1, RPA2 and RPA3 (canonical replication protein A complex). In terms of processing, phosphorylated in a cell-cycle-dependent manner (from the S phase until mitosis). In response to DNA damage, recruited to DNA-repair nuclear foci, as a hypophosphorylated form.

The protein resides in the nucleus. Component of the replication protein A complex (RPA) required for DNA recombination, repair and replication. The activity of RPA is mediated by single-stranded DNA binding and protein interactions. Required fo cell division in meristems. Involved in the maintenance of transcriptional epigenetic gene silencing (TGS) at specific loci (including some transposons) by regulating histone H3 acetylation, 'Lys-4' and 'Lys-9' methylation. In Arabidopsis thaliana (Mouse-ear cress), this protein is Replication protein A 32 kDa subunit B (RPA2B).